We begin with the raw amino-acid sequence, 157 residues long: Protein Smg (157 aa).

The protein belongs to the Smg family.

The sequence is that of Protein Smg from Pectobacterium atrosepticum (strain SCRI 1043 / ATCC BAA-672) (Erwinia carotovora subsp. atroseptica).